We begin with the raw amino-acid sequence, 202 residues long: Ribosomal RNA small subunit methyltransferase G (202 aa).

S-adenosyl-L-methionine is bound by residues Gly-75, Phe-80, 125 to 126 (VQ), and Arg-139.

This sequence belongs to the methyltransferase superfamily. RNA methyltransferase RsmG family.

The protein localises to the cytoplasm. Specifically methylates the N7 position of a guanine in 16S rRNA. This chain is Ribosomal RNA small subunit methyltransferase G, found in Mesomycoplasma hyopneumoniae (strain J / ATCC 25934 / NCTC 10110) (Mycoplasma hyopneumoniae).